The following is a 351-amino-acid chain: Histidine protein kinase SaeS (351 aa).

Helical transmembrane passes span Ile-9–Ile-29 and Thr-40–Ile-60. Residues Asn-61 to Asn-114 form the HAMP domain. The Histidine kinase domain occupies Asn-129 to Asp-348. Residue His-132 is modified to Phosphohistidine; by autocatalysis.

Autophosphorylated.

It localises to the cell membrane. The enzyme catalyses ATP + protein L-histidine = ADP + protein N-phospho-L-histidine.. Member of the two-component regulatory system SaeR/SaeS involved in the regulation of staphylococcal virulence factors in a strain-dependent fashion. Probably functions as a membrane-associated protein kinase that upon sensing the appropriate signal, autophosphorylates and in turn activates the cytosolic response regulator SaeR. The polypeptide is Histidine protein kinase SaeS (saeS) (Staphylococcus aureus (strain bovine RF122 / ET3-1)).